A 1407-amino-acid chain; its full sequence is DNA-directed RNA polymerase subunit beta' (1407 aa).

Zn(2+)-binding residues include Cys70, Cys72, Cys85, and Cys88. Residues Asp460, Asp462, and Asp464 each contribute to the Mg(2+) site. Residues Cys814, Cys888, Cys895, and Cys898 each coordinate Zn(2+). Lys972 carries the post-translational modification N6-acetyllysine.

It belongs to the RNA polymerase beta' chain family. In terms of assembly, the RNAP catalytic core consists of 2 alpha, 1 beta, 1 beta' and 1 omega subunit. When a sigma factor is associated with the core the holoenzyme is formed, which can initiate transcription. Requires Mg(2+) as cofactor. Zn(2+) serves as cofactor.

The catalysed reaction is RNA(n) + a ribonucleoside 5'-triphosphate = RNA(n+1) + diphosphate. Functionally, DNA-dependent RNA polymerase catalyzes the transcription of DNA into RNA using the four ribonucleoside triphosphates as substrates. The protein is DNA-directed RNA polymerase subunit beta' of Shigella flexneri serotype 5b (strain 8401).